We begin with the raw amino-acid sequence, 454 residues long: Bifunctional protein GlmU (454 aa).

The interval 1 to 232 is pyrophosphorylase; the sequence is MTDRTCLSIV…VDNVIGINNR (232 aa). Residues 11 to 14, K25, Q78, and 83 to 84 each bind UDP-N-acetyl-alpha-D-glucosamine; these read LAAG and GT. D108 provides a ligand contact to Mg(2+). G144, E158, N173, and N230 together coordinate UDP-N-acetyl-alpha-D-glucosamine. N230 is a Mg(2+) binding site. The segment at 233–253 is linker; sequence AELAEAETIWQNRKRRELMLS. Residues 254 to 454 form an N-acetyltransferase region; it reads GVTLIAPETV…AIKAAKSVSK (201 aa). Positions 319 and 337 each coordinate UDP-N-acetyl-alpha-D-glucosamine. The active-site Proton acceptor is H349. Y352 and N363 together coordinate UDP-N-acetyl-alpha-D-glucosamine. Acetyl-CoA is bound by residues A366, 372–373, S391, S409, and R426; that span reads NY.

The protein in the N-terminal section; belongs to the N-acetylglucosamine-1-phosphate uridyltransferase family. This sequence in the C-terminal section; belongs to the transferase hexapeptide repeat family. In terms of assembly, homotrimer. Mg(2+) serves as cofactor.

It is found in the cytoplasm. It carries out the reaction alpha-D-glucosamine 1-phosphate + acetyl-CoA = N-acetyl-alpha-D-glucosamine 1-phosphate + CoA + H(+). It catalyses the reaction N-acetyl-alpha-D-glucosamine 1-phosphate + UTP + H(+) = UDP-N-acetyl-alpha-D-glucosamine + diphosphate. The protein operates within nucleotide-sugar biosynthesis; UDP-N-acetyl-alpha-D-glucosamine biosynthesis; N-acetyl-alpha-D-glucosamine 1-phosphate from alpha-D-glucosamine 6-phosphate (route II): step 2/2. It participates in nucleotide-sugar biosynthesis; UDP-N-acetyl-alpha-D-glucosamine biosynthesis; UDP-N-acetyl-alpha-D-glucosamine from N-acetyl-alpha-D-glucosamine 1-phosphate: step 1/1. It functions in the pathway bacterial outer membrane biogenesis; LPS lipid A biosynthesis. Catalyzes the last two sequential reactions in the de novo biosynthetic pathway for UDP-N-acetylglucosamine (UDP-GlcNAc). The C-terminal domain catalyzes the transfer of acetyl group from acetyl coenzyme A to glucosamine-1-phosphate (GlcN-1-P) to produce N-acetylglucosamine-1-phosphate (GlcNAc-1-P), which is converted into UDP-GlcNAc by the transfer of uridine 5-monophosphate (from uridine 5-triphosphate), a reaction catalyzed by the N-terminal domain. This chain is Bifunctional protein GlmU, found in Brucella canis (strain ATCC 23365 / NCTC 10854 / RM-666).